The primary structure comprises 241 residues: Kynurenine formamidase (241 aa).

Residues 23-27 (HGGAW) carry the HGGXW motif. S95 acts as the Nucleophile in catalysis. Catalysis depends on residues D191 and H223.

It belongs to the kynurenine formamidase family. As to quaternary structure, homodimer.

It carries out the reaction N-formyl-L-kynurenine + H2O = L-kynurenine + formate + H(+). It functions in the pathway amino-acid degradation; L-tryptophan degradation via kynurenine pathway; L-kynurenine from L-tryptophan: step 2/2. In terms of biological role, catalyzes the hydrolysis of N-formyl-L-kynurenine to L-kynurenine, the second step in the kynurenine pathway of tryptophan degradation. Kynurenine may be further oxidized to nicotinic acid, NAD(H) and NADP(H). Required for elimination of toxic metabolites. The polypeptide is Kynurenine formamidase (Eremothecium gossypii (strain ATCC 10895 / CBS 109.51 / FGSC 9923 / NRRL Y-1056) (Yeast)).